A 180-amino-acid chain; its full sequence is D-lyxose ketol-isomerase (180 aa).

K62 serves as a coordination point for D-fructose. The Mn(2+) site is built by H75 and H77. K86 lines the D-fructose pocket. Residues E88 and H143 each contribute to the Mn(2+) site. 3 residues coordinate D-fructose: E156, D166, and R175.

The protein belongs to the D-lyxose ketol-isomerase family. Homodimer; disulfide-linked. Stabilized by a disulfide bond between the two monomers of the dimeric enzyme and increased hydrophobicity at the dimer interface. Mn(2+) is required as a cofactor.

It catalyses the reaction D-lyxose = D-xylulose. In terms of biological role, sugar isomerase that catalyzes the reversible isomerization of D-lyxose to D-xylulose. Is highly specific for the substrate D-lyxose, showing less than 2% activity towards mannose and other substrates reported for lyxose isomerases. The sequence is that of D-lyxose ketol-isomerase from Thermofilum sp. (strain ex4484_79).